We begin with the raw amino-acid sequence, 159 residues long: Globin D, coelomic (159 aa).

Gly-2 carries the post-translational modification N-acetylglycine. A Globin domain is found at Asp-12–Ala-158. Residues His-74 and His-105 each contribute to the heme b site.

Belongs to the globin family. As to quaternary structure, homodimer.

The polypeptide is Globin D, coelomic (Molpadia arenicola (Sea cucumber)).